The sequence spans 231 residues: Uracil-DNA glycosylase (231 aa).

Aspartate 70 serves as the catalytic Proton acceptor.

Belongs to the uracil-DNA glycosylase (UDG) superfamily. UNG family.

It localises to the cytoplasm. It carries out the reaction Hydrolyzes single-stranded DNA or mismatched double-stranded DNA and polynucleotides, releasing free uracil.. Excises uracil residues from the DNA which can arise as a result of misincorporation of dUMP residues by DNA polymerase or due to deamination of cytosine. This is Uracil-DNA glycosylase from Campylobacter curvus (strain 525.92).